We begin with the raw amino-acid sequence, 316 residues long: Pantothenate kinase (316 aa).

Residue glycine 95 to serine 102 coordinates ATP.

It belongs to the prokaryotic pantothenate kinase family.

The protein resides in the cytoplasm. It carries out the reaction (R)-pantothenate + ATP = (R)-4'-phosphopantothenate + ADP + H(+). The protein operates within cofactor biosynthesis; coenzyme A biosynthesis; CoA from (R)-pantothenate: step 1/5. The polypeptide is Pantothenate kinase (Shewanella halifaxensis (strain HAW-EB4)).